A 340-amino-acid chain; its full sequence is Short-chain dehydrogenase/reductase ffsI (340 aa).

The NADP(+) site is built by Leu46, Arg71, Asp96, Asn123, Tyr211, and Lys215. Catalysis depends on Tyr211, which acts as the Proton acceptor. The Lowers pKa of active site Tyr role is filled by Lys215.

It belongs to the short-chain dehydrogenases/reductases (SDR) family.

The protein operates within mycotoxin biosynthesis. Functionally, short-chain dehydrogenase/reductase; part of the gene cluster that mediates the biosynthesis of the cytotoxic leucine-containing cytochalasans, including aspochalasin C, aspochalasin E, TMC-169, flavichalasine F, aspergillin PZ, aspochalasin M and flavichalasine G. The first step in the pathway is catalyzed by the hybrid PKS-NRPS ffsA that utilizes 8 units of malonyl-CoA to iteratively assemble the octaketide chain before addition of L-leucine by the C-terminal NRPS modules. Because ffsA lacks a designated enoylreductase (ER) domain, the required activity is provided the enoyl reductase fssC. The methyltransferase (MT) domain of ffsA catalyzes the alpha-methylation at C10 and C14 using S-adenosyl-L-methionine as the methyl-donating cosubstrate. Reduction by the hydrolyase ffsE, followed by dehydration and intra-molecular Diels-Alder cyclization by the Diels-Alderase ffsF then yield the required isoindolone-fused macrocycle. A number of oxidative steps catalyzed by the tailoring cytochrome P450 monooxygenase ffsD, the FAD-linked oxidoreductase ffsJ and the short-chain dehydrogenase/reductase ffsI, are further required to afford the final products. This chain is Short-chain dehydrogenase/reductase ffsI, found in Aspergillus flavipes.